Consider the following 289-residue polypeptide: Ribosomal protein L11 methyltransferase (289 aa).

4 residues coordinate S-adenosyl-L-methionine: Thr135, Gly156, Asp179, and Asn225.

The protein belongs to the methyltransferase superfamily. PrmA family.

It localises to the cytoplasm. It carries out the reaction L-lysyl-[protein] + 3 S-adenosyl-L-methionine = N(6),N(6),N(6)-trimethyl-L-lysyl-[protein] + 3 S-adenosyl-L-homocysteine + 3 H(+). Its function is as follows. Methylates ribosomal protein L11. This chain is Ribosomal protein L11 methyltransferase, found in Chlorobaculum parvum (strain DSM 263 / NCIMB 8327) (Chlorobium vibrioforme subsp. thiosulfatophilum).